The following is a 186-amino-acid chain: NADH-quinone oxidoreductase subunit B 2 (186 aa).

The segment at 1 to 27 is disordered; the sequence is MPSFTQPHSAPRNFQFPGQQRQGDPTM. Residues cysteine 65, cysteine 66, cysteine 130, and cysteine 160 each contribute to the [4Fe-4S] cluster site.

It belongs to the complex I 20 kDa subunit family. In terms of assembly, NDH-1 is composed of 14 different subunits. Subunits NuoB, C, D, E, F, and G constitute the peripheral sector of the complex. [4Fe-4S] cluster serves as cofactor.

The protein resides in the cell inner membrane. It carries out the reaction a quinone + NADH + 5 H(+)(in) = a quinol + NAD(+) + 4 H(+)(out). Functionally, NDH-1 shuttles electrons from NADH, via FMN and iron-sulfur (Fe-S) centers, to quinones in the respiratory chain. The immediate electron acceptor for the enzyme in this species is believed to be ubiquinone. Couples the redox reaction to proton translocation (for every two electrons transferred, four hydrogen ions are translocated across the cytoplasmic membrane), and thus conserves the redox energy in a proton gradient. The sequence is that of NADH-quinone oxidoreductase subunit B 2 from Rhizobium etli (strain ATCC 51251 / DSM 11541 / JCM 21823 / NBRC 15573 / CFN 42).